A 159-amino-acid chain; its full sequence is Ribosome maturation factor RimP (159 aa).

It belongs to the RimP family.

The protein resides in the cytoplasm. In terms of biological role, required for maturation of 30S ribosomal subunits. This chain is Ribosome maturation factor RimP, found in Lacticaseibacillus casei (strain BL23) (Lactobacillus casei).